A 361-amino-acid chain; its full sequence is DNA replication and repair protein RecF (361 aa).

30–37 contributes to the ATP binding site; it reads GDNAQGKT.

This sequence belongs to the RecF family.

It is found in the cytoplasm. The RecF protein is involved in DNA metabolism; it is required for DNA replication and normal SOS inducibility. RecF binds preferentially to single-stranded, linear DNA. It also seems to bind ATP. The polypeptide is DNA replication and repair protein RecF (Clostridium botulinum (strain Alaska E43 / Type E3)).